We begin with the raw amino-acid sequence, 329 residues long: Eukaryotic translation initiation factor 3 subunit I (329 aa).

WD repeat units lie at residues 8-47, 50-89, 145-184, 187-226, and 284-323; these read GHQRAITQIKYNREGDLLFSAAKDSKPNVWWSLNGERLGT, GHGGVIWCLDVDWQSINLITGGGDSSCRLWDLETGKNIAT, ITDSKVTSMIWGSLDETIITGHEAGDLIQWDLRTGKKIHS, EHTHQITDMQLSRDGTMFVTASKDHTAKLFDTNSLELLKE, and GHFGPINSLAFHPDGKSYASGGEDGYVRVHNFDQSYFDYT.

This sequence belongs to the eIF-3 subunit I family. Component of the eukaryotic translation initiation factor 3 (eIF-3) complex.

It is found in the cytoplasm. In terms of biological role, component of the eukaryotic translation initiation factor 3 (eIF-3) complex, which is involved in protein synthesis of a specialized repertoire of mRNAs and, together with other initiation factors, stimulates binding of mRNA and methionyl-tRNAi to the 40S ribosome. The eIF-3 complex specifically targets and initiates translation of a subset of mRNAs involved in cell proliferation. In Bombyx mori (Silk moth), this protein is Eukaryotic translation initiation factor 3 subunit I.